A 183-amino-acid polypeptide reads, in one-letter code: Adenine phosphoribosyltransferase (183 aa).

It belongs to the purine/pyrimidine phosphoribosyltransferase family. In terms of assembly, homodimer.

It localises to the cytoplasm. The catalysed reaction is AMP + diphosphate = 5-phospho-alpha-D-ribose 1-diphosphate + adenine. It functions in the pathway purine metabolism; AMP biosynthesis via salvage pathway; AMP from adenine: step 1/1. Catalyzes a salvage reaction resulting in the formation of AMP, that is energically less costly than de novo synthesis. The protein is Adenine phosphoribosyltransferase of Blochmanniella floridana.